A 398-amino-acid chain; its full sequence is ATP-dependent (S)-NAD(P)H-hydrate dehydratase 1 (398 aa).

In terms of domain architecture, YjeF C-terminal spans 80–391; the sequence is LLRKAFQMIP…GYIGEAFELV (312 aa). (6S)-NADPHX contacts are provided by residues Gly187 and 240–246; that span reads NHVEFQR. ATP-binding positions include 280 to 284 and 300 to 309; these read KGSID and GSPKRCGGQG. Asp310 lines the (6S)-NADPHX pocket.

This sequence belongs to the NnrD/CARKD family. It depends on Mg(2+) as a cofactor.

Its subcellular location is the cytoplasm. It carries out the reaction (6S)-NADHX + ATP = ADP + phosphate + NADH + H(+). The catalysed reaction is (6S)-NADPHX + ATP = ADP + phosphate + NADPH + H(+). In terms of biological role, catalyzes the dehydration of the S-form of NAD(P)HX at the expense of ATP, which is converted to ADP. Together with NAD(P)HX epimerase, which catalyzes the epimerization of the S- and R-forms, the enzyme allows the repair of both epimers of NAD(P)HX, a damaged form of NAD(P)H that is a result of enzymatic or heat-dependent hydration. This chain is ATP-dependent (S)-NAD(P)H-hydrate dehydratase 1, found in Puccinia graminis f. sp. tritici (strain CRL 75-36-700-3 / race SCCL) (Black stem rust fungus).